Consider the following 639-residue polypeptide: Phosphomethylpyrimidine synthase (639 aa).

The disordered stretch occupies residues 49–71 (DTPTDFGGEQNRPVRVYDTSGPY). Substrate-binding positions include Asn231, Met260, Tyr289, His325, 345–347 (SRG), 386–389 (DGLR), and Glu425. His429 contacts Zn(2+). Residue Tyr452 coordinates substrate. His493 is a binding site for Zn(2+). The [4Fe-4S] cluster site is built by Cys573, Cys576, and Cys581.

This sequence belongs to the ThiC family. In terms of assembly, homodimer. The cofactor is [4Fe-4S] cluster.

The enzyme catalyses 5-amino-1-(5-phospho-beta-D-ribosyl)imidazole + S-adenosyl-L-methionine = 4-amino-2-methyl-5-(phosphooxymethyl)pyrimidine + CO + 5'-deoxyadenosine + formate + L-methionine + 3 H(+). The protein operates within cofactor biosynthesis; thiamine diphosphate biosynthesis. Its function is as follows. Catalyzes the synthesis of the hydroxymethylpyrimidine phosphate (HMP-P) moiety of thiamine from aminoimidazole ribotide (AIR) in a radical S-adenosyl-L-methionine (SAM)-dependent reaction. This Teredinibacter turnerae (strain ATCC 39867 / T7901) protein is Phosphomethylpyrimidine synthase.